Reading from the N-terminus, the 71-residue chain is SPI-2 type 3 secretion system needle filament protein (71 aa).

It belongs to the SctF family. As to quaternary structure, the core secretion machinery of the T3SS is composed of approximately 20 different proteins, including cytoplasmic components, a base, an export apparatus and a needle. This subunit polymerizes and forms the helical needle filament.

Its subcellular location is the secreted. The protein resides in the cell surface. Its function is as follows. Component of the type III secretion system (T3SS), also called injectisome, which is used to inject bacterial effector proteins into eukaryotic host cells. SsaG/SctF2 forms the external needle filament that protrudes from the bacterial surface. Functionally, during infection, can induce innate immune responses. The needle proteins interact with host TLR2 or TLR4, and induce signaling by NF-kappa-B and/or AP-1. This activation is MyD88 dependent and results in increased expression of cytokines, including TNF-alpha, IL-6 and IL-8. The chain is SPI-2 type 3 secretion system needle filament protein from Salmonella typhimurium (strain LT2 / SGSC1412 / ATCC 700720).